The primary structure comprises 250 residues: UDP-2,3-diacylglucosamine hydrolase (250 aa).

Mn(2+)-binding residues include aspartate 8, histidine 10, aspartate 41, asparagine 79, and histidine 114. 79 to 80 is a binding site for substrate; that stretch reads NR. 5 residues coordinate substrate: aspartate 122, serine 160, aspartate 172, glutamine 175, and histidine 203. Residues histidine 203 and histidine 205 each coordinate Mn(2+).

Belongs to the LpxH family. The cofactor is Mn(2+).

The protein localises to the cell inner membrane. The catalysed reaction is UDP-2-N,3-O-bis[(3R)-3-hydroxytetradecanoyl]-alpha-D-glucosamine + H2O = 2-N,3-O-bis[(3R)-3-hydroxytetradecanoyl]-alpha-D-glucosaminyl 1-phosphate + UMP + 2 H(+). It participates in glycolipid biosynthesis; lipid IV(A) biosynthesis; lipid IV(A) from (3R)-3-hydroxytetradecanoyl-[acyl-carrier-protein] and UDP-N-acetyl-alpha-D-glucosamine: step 4/6. Hydrolyzes the pyrophosphate bond of UDP-2,3-diacylglucosamine to yield 2,3-diacylglucosamine 1-phosphate (lipid X) and UMP by catalyzing the attack of water at the alpha-P atom. Involved in the biosynthesis of lipid A, a phosphorylated glycolipid that anchors the lipopolysaccharide to the outer membrane of the cell. The sequence is that of UDP-2,3-diacylglucosamine hydrolase from Xylella fastidiosa (strain M23).